The following is a 770-amino-acid chain: Conserved oligomeric Golgi complex subunit 7 (770 aa).

The protein belongs to the COG7 family. In terms of assembly, component of the conserved oligomeric Golgi complex which is composed of eight different subunits and is required for normal Golgi morphology and localization.

Its subcellular location is the golgi apparatus membrane. Its function is as follows. Required for normal Golgi function. This Homo sapiens (Human) protein is Conserved oligomeric Golgi complex subunit 7 (COG7).